Consider the following 245-residue polypeptide: Carboxymethylenebutenolidase homolog (245 aa).

An N-acetylalanine modification is found at A2. The residue at position 36 (K36) is an N6-acetyllysine. Catalysis depends on residues C132, D179, and H212. S223 carries the post-translational modification Phosphoserine.

The protein belongs to the dienelactone hydrolase family. In terms of tissue distribution, widely expressed, with highest levels in liver, followed by kidney, small intestine and colon. Present in liver and intestine (at protein level).

The protein localises to the cytoplasm. It localises to the cytosol. With respect to regulation, strongly inhibited by p-chloromercuribenzoate (PCMB). Partially inhibited by bis-p-nitrophenylphosphate (BNPP). Not inhibited by DFP, PMSF, eserine or EDTA. Its function is as follows. Cysteine hydrolase. Can convert the prodrug olmesartan medoxomil into its pharmacologically active metabolite olmerstatan, an angiotensin receptor blocker, in liver and intestine. May also activate beta-lactam antibiotics faropenem medoxomil and lenampicillin. This chain is Carboxymethylenebutenolidase homolog (CMBL), found in Homo sapiens (Human).